Consider the following 266-residue polypeptide: Phosphatidylglycerol--prolipoprotein diacylglyceryl transferase (266 aa).

4 consecutive transmembrane segments (helical) span residues 14-34 (FGPL…AFFW), 55-75 (FLFY…ILFY), 91-111 (WKGG…MWLF), and 117-137 (VSMF…LFFG). Position 138 (R138) interacts with a 1,2-diacyl-sn-glycero-3-phospho-(1'-sn-glycerol). The next 3 membrane-spanning stretches (helical) occupy residues 172 to 192 (YPTQ…ILMF), 201 to 221 (GAAS…VEFF), and 235 to 255 (WVTM…ALVV).

It belongs to the Lgt family.

The protein resides in the cell inner membrane. The catalysed reaction is L-cysteinyl-[prolipoprotein] + a 1,2-diacyl-sn-glycero-3-phospho-(1'-sn-glycerol) = an S-1,2-diacyl-sn-glyceryl-L-cysteinyl-[prolipoprotein] + sn-glycerol 1-phosphate + H(+). Its pathway is protein modification; lipoprotein biosynthesis (diacylglyceryl transfer). In terms of biological role, catalyzes the transfer of the diacylglyceryl group from phosphatidylglycerol to the sulfhydryl group of the N-terminal cysteine of a prolipoprotein, the first step in the formation of mature lipoproteins. This chain is Phosphatidylglycerol--prolipoprotein diacylglyceryl transferase, found in Hydrogenovibrio crunogenus (strain DSM 25203 / XCL-2) (Thiomicrospira crunogena).